The primary structure comprises 452 residues: uncharacterized protein (452 aa).

14 consecutive transmembrane segments (helical) span residues 8 to 28, 39 to 59, 77 to 97, 100 to 122, 134 to 156, 161 to 183, 203 to 222, 226 to 243, 266 to 286, 302 to 322, 330 to 350, 359 to 379, 393 to 415, and 425 to 447; these read AVFL…SSMI, FHLS…ASAV, FLFG…APTF, LLVM…VGLI, LAVL…GFLI, WPAI…LYMF, LGIV…LLSF, PHAV…AFVW, AVYV…FGLP, LFML…GKWI, PIFA…IFFI, LILS…QAAM, GLFQ…ILFG, and MMGI…FAAL.

The protein belongs to the major facilitator superfamily.

It is found in the cell membrane. This is an uncharacterized protein from Bacillus subtilis (strain 168).